The primary structure comprises 349 residues: 5-deoxyribose 1-phosphate isomerase (349 aa).

Substrate contacts are provided by residues 49 to 51 (RGA), arginine 92, and glutamine 199. Aspartate 240 acts as the Proton donor in catalysis. Position 250 to 251 (250 to 251 (NK)) interacts with substrate.

It belongs to the EIF-2B alpha/beta/delta subunits family. DrdI subfamily.

It carries out the reaction 5-deoxy-alpha-D-ribose 1-phosphate = 5-deoxy-D-ribulose 1-phosphate. Its pathway is carbohydrate degradation. In terms of biological role, catalyzes the isomerization of 5-deoxy-alpha-D-ribose 1-phosphate to 5-deoxy-D-ribulose 1-phosphate, as part of a 5-deoxyribose salvage pathway that recycles this toxic radical SAM enzyme by-product to mainstream metabolites. This chain is 5-deoxyribose 1-phosphate isomerase, found in Clostridium botulinum (strain 657 / Type Ba4).